The sequence spans 799 residues: Target of rapamycin complex 1 subunit TCO89 (799 aa).

A disordered region spans residues 18-41 (NASTVSHQSKPFRQFSTRSRAKSN). 2 positions are modified to phosphothreonine: T52 and T82. A phosphoserine mark is found at S84, S104, S107, S115, and S144. The segment covering 97-126 (NQGKRSASFHSPVHNTLLSPKNSSHSNTGT) has biased composition (polar residues). Disordered stretches follow at residues 97–171 (NQGK…DNIE) and 201–284 (LQSP…ADID). Residues 147–156 (DAQESKKSES) are compositionally biased toward basic and acidic residues. Acidic residues predominate over residues 157-170 (TTDEEVECFSEDNI). A phosphoserine mark is found at S203 and S215. The segment covering 213 to 224 (DKSGTDGKENHR) has biased composition (basic and acidic residues). Residues 233–243 (LSSNNYFGESS) are compositionally biased toward polar residues. Residues 244-253 (HSIEHQKDGE) are compositionally biased toward basic and acidic residues. Positions 254 to 269 (TSPSSIETKLNATSVI) are enriched in polar residues. S290 carries the phosphoserine modification. The segment at 324 to 391 (AHKSNQKPSH…PDDISSAGTK (68 aa)) is disordered. Positions 332–346 (SHSDEQFDQEDHIDA) are enriched in basic and acidic residues. The span at 348 to 363 (RSNSSRKSDSSFMSLR) shows a compositional bias: low complexity. A Phosphoserine modification is found at S397. Disordered stretches follow at residues 418–476 (FENS…QSTF) and 538–568 (NKNS…RQSN). Composition is skewed to polar residues over residues 420 to 429 (NSSSIQNSLG) and 461 to 476 (GRSQ…QSTF). At S575 the chain carries Phosphoserine. A disordered region spans residues 663-685 (IRKKSHNDAQSIAHSSSDTDHKD). The residue at position 707 (S707) is a Phosphoserine.

It belongs to the TORC subunit TCO89 family. The target of rapamycin complex 1 (TORC1) is composed of at least KOG1, LST8, TCO89 and either TOR1 (TORC1-A) or TOR2 (TORC1-B). Interacts with PIB2; following activation of PIB2 by glutamine or cysteine. TORC1 binds to and is inhibited by FKBP-rapamycin.

Its subcellular location is the cell membrane. The protein localises to the vacuole membrane. Functionally, component of TORC1, which regulates multiple cellular processes to control cell growth in response to environmental signals. Nutrient limitation and environmental stress signals cause inactivation of TORC1. Active TORC1 positively controls ribosome biogenesis via control of rRNA, ribosomal protein and tRNA gene expression, and rRNA processing. TORC1 positively controls protein biosynthesis by regulation of mRNA stability, translation initiation factor activity, and high-affinity amino acid permeases that serve to provide amino acids for use by the translation machinery. TORC1 also promotes growth by sequestering a number of nutrient and general stress-responsive transcription factors in the cytoplasm. TORC1 negatively controls macroautophagy, a process to recycle surplus cytoplasmic mass under nutrient starvation conditions. The polypeptide is Target of rapamycin complex 1 subunit TCO89 (TCO89) (Saccharomyces cerevisiae (strain ATCC 204508 / S288c) (Baker's yeast)).